Reading from the N-terminus, the 241-residue chain is Uridylate kinase (241 aa).

12–15 (KISG) contacts ATP. The segment at 20 to 25 (GDKGNG) is involved in allosteric activation by GTP. Residue glycine 54 participates in UMP binding. Residues glycine 55 and arginine 59 each coordinate ATP. UMP contacts are provided by residues aspartate 74 and 135 to 142 (TGNPYFST). The ATP site is built by asparagine 163, tyrosine 169, and aspartate 172.

It belongs to the UMP kinase family. As to quaternary structure, homohexamer.

Its subcellular location is the cytoplasm. The catalysed reaction is UMP + ATP = UDP + ADP. Its pathway is pyrimidine metabolism; CTP biosynthesis via de novo pathway; UDP from UMP (UMPK route): step 1/1. Its activity is regulated as follows. Allosterically activated by GTP. Inhibited by UTP. Its function is as follows. Catalyzes the reversible phosphorylation of UMP to UDP. This is Uridylate kinase from Lactobacillus helveticus (strain DPC 4571).